A 193-amino-acid polypeptide reads, in one-letter code: Achaete-scute homolog 2 (193 aa).

3 disordered regions span residues 1–27 (MDGG…RRPA), 37–56 (RRRP…ARRN), and 118–177 (GGLR…GALS). The 53-residue stretch at 50–102 (AAVARRNERERNRVKLVNLGFQALRQHVPHGGASKKLSKVETLRSAVEYIRAL) folds into the bHLH domain. Positions 140–150 (AASPSRASSSP) are enriched in low complexity.

In terms of assembly, efficient DNA binding requires dimerization with another basic helix-loop-helix (bHLH) protein. Forms heterodimers with bHLH transcription factor TCF3. May not heterodimerise with bHLH protein HAND1. As to expression, expressed in the placenta at a stage between the first and second trimesters and when it matures, at about 32-36 weeks. Expressed in the extravillous trophoblasts, the intermediate trophoblasts, and at lower levels in the cytotrophoblasts and stroma of chorionic villi of the developing placenta. Expressed in follicular T-helper (Tfh) cells.

Its subcellular location is the nucleus. In terms of biological role, transcription factor. Binds to E-box motifs 5'-CANNTG-3' in the regulatory elements of target genes, probably as a heterodimer with another basic helix-loop-helix (bHLH) protein such as the transcription factor TCF3. May bind both open and closed chromatin, acting as a pioneer transcription factor to allow other factors to bind and activate lineage-specific genes. Required during post-implantation development for the generation of some differentiated trophoblast cell types. Transcriptional activity of ASCL2 may be antagonised in a subset of trophoblast cells by bHLH transcription factor HAND1, perhaps by competing for dimerization with other bHLH proteins. Involved in differentiation and function of follicular T-helper (Tfh) cells, thereby playing a role in germinal center responses; probably modulates expression of genes involved in Tfh cell function, such as BCL6. May also act as a suppressor of Th1-, Th2- and Th17-cell differentiation. Induces the formation of stem cells in intestinal crypts in vitro, synergistically activating transcription of target genes, such as SOX9, together with TCF4/beta-catenin. May form a bistable transcriptional switch, controlling expression of its own gene together with Wnt/R-spondin signaling, and thereby maintaining stem cell characteristics. Modulates expression of target genes, including perhaps down-regulating EGR1/Krox24 and chemokine CXCL10/Mob-1 and up-regulating CXCR4 and CDKN1C/p57kip2, in Schwann cells. May play a role in reducing proliferation of Schwann cells, perhaps acting via modulation of expression of CDKN1C. May be dispensable for blastocyst formation and later embryonic function. May be involved in the determination of neuronal precursors. The polypeptide is Achaete-scute homolog 2 (ASCL2) (Homo sapiens (Human)).